A 384-amino-acid polypeptide reads, in one-letter code: Alkanesulfonate monooxygenase (384 aa).

This sequence belongs to the SsuD family.

It carries out the reaction an alkanesulfonate + FMNH2 + O2 = an aldehyde + FMN + sulfite + H2O + 2 H(+). Functionally, catalyzes the desulfonation of aliphatic sulfonates. In Burkholderia thailandensis (strain ATCC 700388 / DSM 13276 / CCUG 48851 / CIP 106301 / E264), this protein is Alkanesulfonate monooxygenase.